Consider the following 213-residue polypeptide: Pyridoxine/pyridoxamine 5'-phosphate oxidase (213 aa).

Residues 60–65 (RMVLMK), 75–76 (YS), Lys82, and Gln104 contribute to the FMN site. Lys65 contacts substrate. Residues Tyr122 and Arg126 each coordinate substrate. FMN is bound by residues 139-140 (QS) and Trp184. Residue 190–192 (RLH) coordinates substrate. Arg194 is an FMN binding site.

The protein belongs to the pyridoxamine 5'-phosphate oxidase family. In terms of assembly, homodimer. It depends on FMN as a cofactor.

The enzyme catalyses pyridoxamine 5'-phosphate + O2 + H2O = pyridoxal 5'-phosphate + H2O2 + NH4(+). It catalyses the reaction pyridoxine 5'-phosphate + O2 = pyridoxal 5'-phosphate + H2O2. The protein operates within cofactor metabolism; pyridoxal 5'-phosphate salvage; pyridoxal 5'-phosphate from pyridoxamine 5'-phosphate: step 1/1. It participates in cofactor metabolism; pyridoxal 5'-phosphate salvage; pyridoxal 5'-phosphate from pyridoxine 5'-phosphate: step 1/1. Its function is as follows. Catalyzes the oxidation of either pyridoxine 5'-phosphate (PNP) or pyridoxamine 5'-phosphate (PMP) into pyridoxal 5'-phosphate (PLP). This chain is Pyridoxine/pyridoxamine 5'-phosphate oxidase, found in Bradyrhizobium diazoefficiens (strain JCM 10833 / BCRC 13528 / IAM 13628 / NBRC 14792 / USDA 110).